A 102-amino-acid polypeptide reads, in one-letter code: MPALTKAQLAELLFEKIGLNKRESKDMVDAFFDLVADSLLKGEDVKISGFGNFQIRTKAPRPGRNPRTGETIPIQARRVVTFHAGYKLKEQIQDQELVPLAP.

Belongs to the bacterial histone-like protein family. In terms of assembly, heterodimer of an alpha and a beta chain.

This protein is one of the two subunits of integration host factor, a specific DNA-binding protein that functions in genetic recombination as well as in transcriptional and translational control. The sequence is that of Integration host factor subunit alpha from Albidiferax ferrireducens (strain ATCC BAA-621 / DSM 15236 / T118) (Rhodoferax ferrireducens).